The sequence spans 177 residues: 2-C-methyl-D-erythritol 2,4-cyclodiphosphate synthase (177 aa).

2 residues coordinate a divalent metal cation: Asp23 and His25. Residues 23 to 25 (DVH) and 49 to 50 (HS) contribute to the 4-CDP-2-C-methyl-D-erythritol 2-phosphate site. His57 lines the a divalent metal cation pocket. Residues 71 to 73 (DIG), 76 to 80 (FSDTD), 115 to 121 (AQAPRMA), and Arg157 contribute to the 4-CDP-2-C-methyl-D-erythritol 2-phosphate site.

The protein belongs to the IspF family. Homotrimer. A divalent metal cation serves as cofactor.

It catalyses the reaction 4-CDP-2-C-methyl-D-erythritol 2-phosphate = 2-C-methyl-D-erythritol 2,4-cyclic diphosphate + CMP. It functions in the pathway isoprenoid biosynthesis; isopentenyl diphosphate biosynthesis via DXP pathway; isopentenyl diphosphate from 1-deoxy-D-xylulose 5-phosphate: step 4/6. In terms of biological role, involved in the biosynthesis of isopentenyl diphosphate (IPP) and dimethylallyl diphosphate (DMAPP), two major building blocks of isoprenoid compounds. Catalyzes the conversion of 4-diphosphocytidyl-2-C-methyl-D-erythritol 2-phosphate (CDP-ME2P) to 2-C-methyl-D-erythritol 2,4-cyclodiphosphate (ME-CPP) with a corresponding release of cytidine 5-monophosphate (CMP). The chain is 2-C-methyl-D-erythritol 2,4-cyclodiphosphate synthase from Nitrosospira multiformis (strain ATCC 25196 / NCIMB 11849 / C 71).